The primary structure comprises 426 residues: Serine--tRNA ligase (426 aa).

L-serine is bound at residue 233-235; the sequence is TAE. 264–266 serves as a coordination point for ATP; it reads RSE. Glutamate 287 serves as a coordination point for L-serine. 351 to 354 lines the ATP pocket; that stretch reads EISS. Serine 387 lines the L-serine pocket.

The protein belongs to the class-II aminoacyl-tRNA synthetase family. Type-1 seryl-tRNA synthetase subfamily. Homodimer. The tRNA molecule binds across the dimer.

The protein localises to the cytoplasm. It catalyses the reaction tRNA(Ser) + L-serine + ATP = L-seryl-tRNA(Ser) + AMP + diphosphate + H(+). The catalysed reaction is tRNA(Sec) + L-serine + ATP = L-seryl-tRNA(Sec) + AMP + diphosphate + H(+). Its pathway is aminoacyl-tRNA biosynthesis; selenocysteinyl-tRNA(Sec) biosynthesis; L-seryl-tRNA(Sec) from L-serine and tRNA(Sec): step 1/1. Its function is as follows. Catalyzes the attachment of serine to tRNA(Ser). Is also able to aminoacylate tRNA(Sec) with serine, to form the misacylated tRNA L-seryl-tRNA(Sec), which will be further converted into selenocysteinyl-tRNA(Sec). This is Serine--tRNA ligase from Pseudomonas putida (strain GB-1).